Reading from the N-terminus, the 305-residue chain is Mas-related G-protein coupled receptor member A7 (305 aa).

The Extracellular segment spans residues 1–17 (MDETSPRSIDIESLIPN). The helical transmembrane segment at 18 to 38 (LMIIIFGLVGLTGNAIVLWLL) threads the bilayer. Over 39 to 46 (GFCLHRNA) the chain is Cytoplasmic. A helical transmembrane segment spans residues 47–67 (FLVYILNLALADFLFLLCHFI). The Extracellular segment spans residues 68–81 (NSAMFLLKVPIPNG). Residues 82-102 (IFVYCFYTIKMVLYITGLSML) traverse the membrane as a helical segment. Over 103–129 (SAISTERCLSVLCPIWYHCRRPEHTST) the chain is Cytoplasmic. The chain crosses the membrane as a helical span at residues 130-150 (VMCAVIWIFSVLICILKEYFC). Residues 151 to 167 (DFFGTKLGNYYVCQASN) are Extracellular-facing. A helical membrane pass occupies residues 168–188 (FFMGAYLMFLFVVLCLSTLAL). At 189 to 211 (LARLFCGAEKMKFTRLFVTIMLT) the chain is on the cytoplasmic side. A helical membrane pass occupies residues 212 to 232 (ILVFLLCGLPWGFFWFLLIWI). Residues 233–244 (KGGFSVLDYRLY) are Extracellular-facing. Residues 245-265 (LASIVLTVVNSCANPIIYFFV) traverse the membrane as a helical segment. Over 266–305 (GSFRHRLKHQTLKMVLQSALQDTPETHENMVEMSRIKAEQ) the chain is Cytoplasmic.

It belongs to the G-protein coupled receptor 1 family. Mas subfamily. As to expression, expressed in a subset of sensory neurons that includes nociceptors. Expressed in the subclass of non-peptidergic sensory neurons that are IB4(+) and VR1(-).

It is found in the cell membrane. Orphan receptor. May be a receptor for RFamide-family neuropeptides such as NPFF and NPAF, which are analgesic in vivo. May regulate nociceptor function and/or development, including the sensation or modulation of pain. The chain is Mas-related G-protein coupled receptor member A7 (Mrgpra7) from Mus musculus (Mouse).